We begin with the raw amino-acid sequence, 721 residues long: 1,4-alpha-glucan branching enzyme GlgB (721 aa).

Residue D400 is the Nucleophile of the active site. E453 serves as the catalytic Proton donor.

The protein belongs to the glycosyl hydrolase 13 family. GlgB subfamily. As to quaternary structure, monomer.

It catalyses the reaction Transfers a segment of a (1-&gt;4)-alpha-D-glucan chain to a primary hydroxy group in a similar glucan chain.. The protein operates within glycan biosynthesis; glycogen biosynthesis. Functionally, catalyzes the formation of the alpha-1,6-glucosidic linkages in glycogen by scission of a 1,4-alpha-linked oligosaccharide from growing alpha-1,4-glucan chains and the subsequent attachment of the oligosaccharide to the alpha-1,6 position. The protein is 1,4-alpha-glucan branching enzyme GlgB of Chlamydia felis (strain Fe/C-56) (Chlamydophila felis).